Reading from the N-terminus, the 276-residue chain is uncharacterized protein (276 aa).

Residues 1-4 (MNRG) constitute a propeptide, leader sequence. N-methylmethionine is present on methionine 5. A helical transmembrane segment spans residues 5–26 (MTLIELLVALALSIILSLGLYY).

The protein resides in the membrane. This is an uncharacterized protein from Aquifex aeolicus (strain VF5).